A 574-amino-acid chain; its full sequence is Tyrosinase (574 aa).

The Cu cation site is built by histidine 67, histidine 95, histidine 104, histidine 275, histidine 279, and histidine 304. The segment at residues cysteine 93 to histidine 95 is a cross-link (2'-(S-cysteinyl)-histidine (Cys-His)).

It belongs to the tyrosinase family. The cofactor is Cu(2+).

It catalyses the reaction 2 L-dopa + O2 = 2 L-dopaquinone + 2 H2O. The enzyme catalyses L-tyrosine + O2 = L-dopaquinone + H2O. This is a copper-containing oxidase that functions in the formation of pigments such as melanins and other polyphenolic compounds. The sequence is that of Tyrosinase (TYR) from Podospora anserina (Pleurage anserina).